Reading from the N-terminus, the 372-residue chain is Lysophosphatidic acid receptor 5 (372 aa).

Topologically, residues 1–30 (MFANSSANTTSTNSSVLQCPDYRDTHRLHM) are extracellular. Asparagine 4, asparagine 8, and asparagine 13 each carry an N-linked (GlcNAc...) asparagine glycan. The chain crosses the membrane as a helical span at residues 31–51 (VVYSLVLATGLPLNALALWVF). At 52–59 (LRVLRVHS) the chain is on the cytoplasmic side. Residues 60 to 80 (VVSVYMCNLAASDLLFTLSLP) traverse the membrane as a helical segment. The Extracellular segment spans residues 81-100 (LRLSYYAQHHWPFPGFLCQT). An intrachain disulfide couples cysteine 98 to cysteine 179. A helical membrane pass occupies residues 101–121 (SGAIFQMNMYGSCLFLMLINV). Residues 122–140 (DRYAAIVHPLRLRHLRRPR) are Cytoplasmic-facing. Residues 141–161 (VARRLCLGVWALILLFAVPAA) traverse the membrane as a helical segment. The Extracellular segment spans residues 162 to 191 (RVHSPSHCTYKNITVRLCFESFSDELWKGR). An N-linked (GlcNAc...) asparagine glycan is attached at asparagine 173. Residues 192–212 (LLPLLLLAEILGFLLPLAAVV) traverse the membrane as a helical segment. Topologically, residues 213–243 (YSSGRVFWTLARPDATQSQRRRKTVRLLLAN) are cytoplasmic. The helical transmembrane segment at 244–264 (LIIFLLCFVPYNSTLAVYGLL) threads the bilayer. Residues 265–280 (RANLVKNSIQDRDQVR) lie on the Extracellular side of the membrane. The helical transmembrane segment at 281-301 (GVLMIMVLLAGANCVLDPLVY) threads the bilayer. Residues 302 to 372 (YFSAEGFRNT…PDNCSQDSAL (71 aa)) lie on the Cytoplasmic side of the membrane.

Belongs to the G-protein coupled receptor 1 family.

It localises to the cell membrane. Its function is as follows. Receptor for lysophosphatidic acid (LPA), a mediator of diverse cellular activities. This Mus musculus (Mouse) protein is Lysophosphatidic acid receptor 5 (Lpar5).